A 1565-amino-acid polypeptide reads, in one-letter code: Synemin (1565 aa).

The tract at residues 1–10 is head; that stretch reads MLSWRLQTGP. The tract at residues 11–49 is coil 1A; that stretch reads EKAELQELNARLYDYVCRVRELERENLLLEEELRGRRGR. The segment at 11–320 is interaction with DMD and UTRN; it reads EKAELQELNA…YRALLEGESN (310 aa). An IF rod domain is found at 11–322; it reads EKAELQELNA…ALLEGESNPE (312 aa). Residues 50–58 are linker 1; the sequence is EGLWAEGQA. The tract at residues 59–163 is coil 1B; the sequence is RCAEEARSLR…ELRARAASLT (105 aa). A linker 12 region spans residues 164-186; sequence MHFRARATGPAAPPPRLREVHDS. The coil 2 stretch occupies residues 187-300; it reads YALLVAESWR…LRDYQDLLQV (114 aa). The segment at 301 to 1565 is tail; sequence KTGLSLEVAT…EEEENDGHWF (1265 aa). The disordered stretch occupies residues 401–421; sequence SGYSSSATTQQENSYGKAVSS. Residues 402–421 show a composition bias toward polar residues; it reads GYSSSATTQQENSYGKAVSS. Ser-429 carries the post-translational modification Phosphoserine. Residues 472 to 609 are disordered; that stretch reads YRDRRDKVAA…VKDAGGGTGR (138 aa). Basic and acidic residues predominate over residues 498–577; sequence KKTEVKATRE…KEKSVREREV (80 aa). A phosphothreonine mark is found at Thr-598 and Thr-651. 2 positions are modified to phosphoserine: Ser-653 and Ser-777. The segment covering 1019-1040 has biased composition (basic and acidic residues); sequence LSKDEASEMEKAVESVVRESLS. Positions 1019–1060 are disordered; it reads LSKDEASEMEKAVESVVRESLSRQRSPAPGSPDEEGGAEAPA. Ser-1044, Ser-1049, Ser-1077, Ser-1087, Ser-1181, and Ser-1184 each carry phosphoserine. A disordered region spans residues 1080–1105; the sequence is SEVAGGASHSSGQRTPQGPVSATVEV. The segment covering 1087 to 1105 has biased composition (polar residues); the sequence is SHSSGQRTPQGPVSATVEV. An interaction with TLN1 and VCL region spans residues 1152-1463; sequence VSAGGDLSQA…GPKETSFTFQ (312 aa). Disordered regions lie at residues 1198 to 1221 and 1332 to 1415; these read EAWG…GRHS and QLGE…ETSE. Positions 1244–1563 are interaction with DMD and UTRN; it reads GKVGDYFATE…DNEEEENDGH (320 aa). A compositionally biased stretch (polar residues) spans 1354–1379; sequence ATHSHTSGRQTVMTEKSTFQSVVSES. Phosphoserine is present on Ser-1435. Arg-1487 is subject to Omega-N-methylarginine. The interval 1505–1525 is disordered; it reads FKASAGEGDQAHREQGKEQAM. Residues 1513-1525 show a composition bias toward basic and acidic residues; it reads DQAHREQGKEQAM.

It belongs to the intermediate filament family. As to quaternary structure, interacts with GFAP and VIM. Isoform 1 interacts with TLN1 and VCL. Isoform 2 interacts with DES and DTNA. Isoform 1 and isoform 2 interact with DMD and UTRN. As to expression, isoform 2 is strongly detected in adult heart, fetal skeletal muscles and fetal heart. Isoform 1 is weakly detected in fetal heart and also in fetal skeletal muscle. Isoform 1 and isoform 2 are detected in adult bladder (at protein level). The mRNA is predominantly expressed in heart and muscle with some expression in brain which may be due to tissue-specific isoforms.

The protein localises to the cytoplasm. The protein resides in the cytoskeleton. Its subcellular location is the cell junction. It localises to the adherens junction. Type-VI intermediate filament (IF) which plays an important cytoskeletal role within the muscle cell cytoskeleton. It forms heteromeric IFs with desmin and/or vimentin, and via its interaction with cytoskeletal proteins alpha-dystrobrevin, dystrophin, talin-1, utrophin and vinculin, is able to link these heteromeric IFs to adherens-type junctions, such as to the costameres, neuromuscular junctions, and myotendinous junctions within striated muscle cells. The chain is Synemin from Homo sapiens (Human).